The chain runs to 128 residues: Ribonuclease pancreatic (128 aa).

Basic and acidic residues predominate over residues 1-13 (GESRAEKFQRQHM). A disordered region spans residues 1-24 (GESRAEKFQRQHMDSGSSPSSSST). Positions 7 and 10 each coordinate substrate. The active-site Proton acceptor is the histidine 12. Disulfide bonds link cysteine 26–cysteine 84, cysteine 40–cysteine 95, cysteine 58–cysteine 110, and cysteine 65–cysteine 72. Asparagine 34 carries N-linked (GlcNAc...) asparagine glycosylation. Substrate contacts are provided by residues 41–45 (KSVNT), lysine 66, and arginine 85. Histidine 119 functions as the Proton donor in the catalytic mechanism.

This sequence belongs to the pancreatic ribonuclease family. In terms of assembly, monomer. Interacts with and forms tight 1:1 complexes with RNH1. Dimerization of two such complexes may occur. Interaction with RNH1 inhibits this protein. In terms of tissue distribution, pancreas and other tissues and body fluids (indicating it may have other physiological functions besides its role in digestion).

It is found in the secreted. The catalysed reaction is an [RNA] containing cytidine + H2O = an [RNA]-3'-cytidine-3'-phosphate + a 5'-hydroxy-ribonucleotide-3'-[RNA].. The enzyme catalyses an [RNA] containing uridine + H2O = an [RNA]-3'-uridine-3'-phosphate + a 5'-hydroxy-ribonucleotide-3'-[RNA].. Functionally, endonuclease that catalyzes the cleavage of RNA on the 3' side of pyrimidine nucleotides. Acts on single-stranded and double-stranded RNA. The polypeptide is Ribonuclease pancreatic (RNASE1) (Semnopithecus entellus (Northern plains gray langur)).